Reading from the N-terminus, the 556-residue chain is Putative cysteine ligase BshC (556 aa).

2 coiled-coil regions span residues 408–442 (ILQK…IAQA) and 468–513 (LGQV…ANLT).

Belongs to the BshC family.

Functionally, involved in bacillithiol (BSH) biosynthesis. May catalyze the last step of the pathway, the addition of cysteine to glucosamine malate (GlcN-Mal) to generate BSH. The sequence is that of Putative cysteine ligase BshC from Symbiobacterium thermophilum (strain DSM 24528 / JCM 14929 / IAM 14863 / T).